The following is a 658-amino-acid chain: Alkyldihydroxyacetonephosphate synthase, peroxisomal (658 aa).

Disordered regions lie at residues 1–41 (MAEA…LRVL) and 63–86 (AASA…IPKK). Residues 1 to 58 (MAEAAAAAGGTGLGAGASYGSAADRDRDPDPDRAGRRLRVLSGHLLGRPREALSTNEC) constitute a peroxisome transit peptide. The segment covering 23 to 35 (ADRDRDPDPDRAG) has biased composition (basic and acidic residues). Positions 63-77 (AASAATAAPTATPAA) are enriched in low complexity. Residue Ser-65 is modified to Phosphoserine. Thr-74 is subject to Phosphothreonine. At Lys-102 the chain carries N6-acetyllysine. In terms of domain architecture, FAD-binding PCMH-type spans 202–384 (FERIPDIVLW…TEATIKIRPV (183 aa)). FAD contacts are provided by residues 234–240 (PIGGGTS), 303–309 (DSLEFST), and 316–319 (TRAS). N6-acetyllysine is present on Lys-347. 368–374 (EGTLGVI) contacts FAD. Arg-515 contacts substrate. The active-site Proton donor/acceptor is Tyr-578. Important for enzyme activity regions lie at residues 615–617 (HHH) and 654–658 (NRNLL).

Belongs to the FAD-binding oxidoreductase/transferase type 4 family. As to quaternary structure, homodimer. FAD is required as a cofactor.

It localises to the peroxisome membrane. Its subcellular location is the peroxisome. It catalyses the reaction a long chain fatty alcohol + a 1-acylglycerone 3-phosphate = a 1-O-alkylglycerone 3-phosphate + a long-chain fatty acid + H(+). The catalysed reaction is hexadecan-1-ol + 1-hexadecanoylglycerone 3-phosphate = 1-O-hexadecylglycerone 3-phosphate + hexadecanoate + H(+). It carries out the reaction 1-hexadecanoylglycerone 3-phosphate + a long-chain fatty acid = a 1-acylglycerone 3-phosphate + hexadecanoate. The protein operates within glycerolipid metabolism; ether lipid biosynthesis. In terms of biological role, catalyzes the exchange of the acyl chain in acyl-dihydroxyacetonephosphate (acyl-DHAP) for a long chain fatty alcohol, yielding the first ether linked intermediate, i.e. alkyl-dihydroxyacetonephosphate (alkyl-DHAP), in the pathway of ether lipid biosynthesis. This Homo sapiens (Human) protein is Alkyldihydroxyacetonephosphate synthase, peroxisomal (AGPS).